We begin with the raw amino-acid sequence, 541 residues long: Chaperonin GroEL 2 (541 aa).

ATP is bound by residues T29 to P32, D86 to T90, G413, N476 to A478, and D492.

It belongs to the chaperonin (HSP60) family. Forms a cylinder of 14 subunits composed of two heptameric rings stacked back-to-back. Interacts with the co-chaperonin GroES.

The protein resides in the secreted. Its subcellular location is the capsule. The protein localises to the cell surface. It is found in the cell wall. It catalyses the reaction ATP + H2O + a folded polypeptide = ADP + phosphate + an unfolded polypeptide.. In terms of biological role, together with its co-chaperonin GroES, plays an essential role in assisting protein folding. The GroEL-GroES system forms a nano-cage that allows encapsulation of the non-native substrate proteins and provides a physical environment optimized to promote and accelerate protein folding. The chain is Chaperonin GroEL 2 from Mycolicibacterium vanbaalenii (strain DSM 7251 / JCM 13017 / BCRC 16820 / KCTC 9966 / NRRL B-24157 / PYR-1) (Mycobacterium vanbaalenii).